The primary structure comprises 215 residues: Late embryogenesis abundant protein 14 (215 aa).

Disordered stretches follow at residues 1–129 and 190–215; these read MASQ…GQTG and SGDN…SDYQ. Basic and acidic residues-rich tracts occupy residues 13–24, 32–41, 54–81, and 88–111; these read GETKARAEEKTG, EKAREAKDTA, GAKE…KDAA, and AMDK…DRAA. Residues 192–215 show a composition bias toward polar residues; that stretch reads DNKNNAAAGKDTSTYKPGTGSDYQ.

This sequence belongs to the LEA type 4 family. As to expression, expressed in the shoot apex and leaves. Expressed in dry seeds. Expressed in roots and leaves.

Its subcellular location is the nucleus. This chain is Late embryogenesis abundant protein 14, found in Oryza sativa subsp. japonica (Rice).